The chain runs to 316 residues: 4-diphosphocytidyl-2-C-methyl-D-erythritol kinase (316 aa).

Residue K32 is part of the active site. 126 to 136 (PVGAGLGGGSA) contributes to the ATP binding site. D168 is a catalytic residue.

The protein belongs to the GHMP kinase family. IspE subfamily.

It catalyses the reaction 4-CDP-2-C-methyl-D-erythritol + ATP = 4-CDP-2-C-methyl-D-erythritol 2-phosphate + ADP + H(+). The protein operates within isoprenoid biosynthesis; isopentenyl diphosphate biosynthesis via DXP pathway; isopentenyl diphosphate from 1-deoxy-D-xylulose 5-phosphate: step 3/6. Functionally, catalyzes the phosphorylation of the position 2 hydroxy group of 4-diphosphocytidyl-2C-methyl-D-erythritol. The protein is 4-diphosphocytidyl-2-C-methyl-D-erythritol kinase of Bifidobacterium longum (strain DJO10A).